We begin with the raw amino-acid sequence, 321 residues long: NADPH-dependent D-xylose reductase (321 aa).

Tyr-50 serves as the catalytic Proton donor. His-112 lines the substrate pocket. NADP(+) contacts are provided by residues 167–168 (SN), 216–225 (SSFGPQSFVE), and 272–282 (KSNKKERLLGN).

Belongs to the aldo/keto reductase family.

The catalysed reaction is xylitol + NAD(+) = D-xylose + NADH + H(+). It catalyses the reaction xylitol + NADP(+) = D-xylose + NADPH + H(+). The protein operates within carbohydrate metabolism; D-xylose degradation. Functionally, reduces D-xylose into xylitol. Preferentially utilizes NADPH as a cosubstrate. The polypeptide is NADPH-dependent D-xylose reductase (XYL1) (Candida boidinii (Yeast)).